The sequence spans 629 residues: Chaperone protein HtpG (629 aa).

The a; substrate-binding stretch occupies residues 1–337 (MAASKETMQF…SSDLPLNVSR (337 aa)). Positions 338–554 (EILQGNRVID…ERDMALYMQQ (217 aa)) are b. A c region spans residues 555–629 (LLKQAGHEIS…INQLMLALAG (75 aa)).

It belongs to the heat shock protein 90 family. As to quaternary structure, homodimer.

The protein resides in the cytoplasm. In terms of biological role, molecular chaperone. Has ATPase activity. This Acidithiobacillus ferrooxidans (strain ATCC 23270 / DSM 14882 / CIP 104768 / NCIMB 8455) (Ferrobacillus ferrooxidans (strain ATCC 23270)) protein is Chaperone protein HtpG.